A 268-amino-acid polypeptide reads, in one-letter code: Ribosomal RNA small subunit methyltransferase A (268 aa).

The S-adenosyl-L-methionine site is built by Asn-16, Leu-18, Gly-43, Glu-64, Asp-89, and Asn-110.

It belongs to the class I-like SAM-binding methyltransferase superfamily. rRNA adenine N(6)-methyltransferase family. RsmA subfamily.

Its subcellular location is the cytoplasm. The catalysed reaction is adenosine(1518)/adenosine(1519) in 16S rRNA + 4 S-adenosyl-L-methionine = N(6)-dimethyladenosine(1518)/N(6)-dimethyladenosine(1519) in 16S rRNA + 4 S-adenosyl-L-homocysteine + 4 H(+). In terms of biological role, specifically dimethylates two adjacent adenosines (A1518 and A1519) in the loop of a conserved hairpin near the 3'-end of 16S rRNA in the 30S particle. May play a critical role in biogenesis of 30S subunits. This is Ribosomal RNA small subunit methyltransferase A from Pseudomonas syringae pv. tomato (strain ATCC BAA-871 / DC3000).